The sequence spans 460 residues: MAVKRMWGGRFEATGAKWVEEFGASISFDQQMAAEDLEGSLAHVTMLKETKILPAADADQIITGLKKLQDQLEAGELTFTVENEDIHMNLEALLTEEIGPVAGKLHTARSRNDQVATDLHLYVKHRLPHVIQAIKDLQKVLVEKAAANVETIMPGYTHLQHAQPISYGHYLMAYFQMLQRDVERFEFNQQHTDLMPLGAAALAGTTFPIDRELTAKLLDFQAPYANSLDAVSDRDFVLEFLANAAILMTHLSRLCEEIIMWCSYEFGYLELSDQYSTGSSIMPQKKNPDMAELVRGKTGRVNGHLLGLLTTIKGLPLAYNKDLQEDKEGLFDAVKTIMPSLKVVAGMLETAHVNKEKMAQATERDFSNATELADYLATKGIPFRQAHAIVGQLVLEGLKTGTTLQEIPLAKYQEIDPAIGEDVYHDLQSKVAVERRNSLGGTGFDQVKAQIEAAKQLLSK.

The protein belongs to the lyase 1 family. Argininosuccinate lyase subfamily.

It is found in the cytoplasm. The catalysed reaction is 2-(N(omega)-L-arginino)succinate = fumarate + L-arginine. It participates in amino-acid biosynthesis; L-arginine biosynthesis; L-arginine from L-ornithine and carbamoyl phosphate: step 3/3. The polypeptide is Argininosuccinate lyase (Limosilactobacillus fermentum (strain NBRC 3956 / LMG 18251) (Lactobacillus fermentum)).